Consider the following 317-residue polypeptide: MTTALDQLKQYTTVVADTGDFQQLAQYKPQDATTNPSLILKAVQKDDYKPLLEKTVKAHASKPVGAIIDQLLIAFGTEILKIIPGRVSTEVDARLSFDTEGSIAKGRELIALYKEHGIGRERVLIKLASTWEGIRAAEVLQKEGIHCNMTLLFSLAQAAACAEAGAQLISPFVGRIYDWYKKNAGSAWDEAKDGGANDPGVKSVRRIYAYYKKFGYKTEVMGASFRTPGQILELAGCDLLTISPDLLQKLHESTEKVERKLSPDIAKESDIERVPVDESSFRFLVNDEAMATEKLAEGIRAFAADAIKLEKLIDALR.

Residue K126 is the Schiff-base intermediate with substrate of the active site.

The protein belongs to the transaldolase family. Type 1 subfamily. Homodimer.

The protein localises to the cytoplasm. The enzyme catalyses D-sedoheptulose 7-phosphate + D-glyceraldehyde 3-phosphate = D-erythrose 4-phosphate + beta-D-fructose 6-phosphate. The protein operates within carbohydrate degradation; pentose phosphate pathway; D-glyceraldehyde 3-phosphate and beta-D-fructose 6-phosphate from D-ribose 5-phosphate and D-xylulose 5-phosphate (non-oxidative stage): step 2/3. Its function is as follows. Transaldolase is important for the balance of metabolites in the pentose-phosphate pathway. This chain is Transaldolase, found in Paraburkholderia xenovorans (strain LB400).